We begin with the raw amino-acid sequence, 879 residues long: Translation initiation factor IF-2 (879 aa).

Disordered stretches follow at residues 45–216 and 228–293; these read AGHM…ERKR and SYEE…EKPV. Basic and acidic residues-rich tracts occupy residues 60–72, 83–99, and 107–163; these read NAAKSDNKSDKNS, RKTDARKSQSSEKKISP, and AEKK…ERLQ. Positions 164-173 are enriched in low complexity; the sequence is MEAALQAQMQ. Composition is skewed to basic and acidic residues over residues 174-216, 228-271, and 280-291; these read EQER…ERKR, SYEE…ERRN, and RNNDNKKGKFEK. In terms of domain architecture, tr-type G spans 380–549; it reads VRAPVVTIMG…LIQAEMLELT (170 aa). The segment at 389–396 is G1; the sequence is GHVDHGKT. 389–396 is a GTP binding site; sequence GHVDHGKT. The interval 414–418 is G2; it reads GITQH. The tract at residues 435 to 438 is G3; that stretch reads DTPG. Residues 435-439 and 489-492 contribute to the GTP site; these read DTPGH and NKMD. The tract at residues 489 to 492 is G4; it reads NKMD. A G5 region spans residues 525–527; the sequence is SAK.

This sequence belongs to the TRAFAC class translation factor GTPase superfamily. Classic translation factor GTPase family. IF-2 subfamily.

Its subcellular location is the cytoplasm. One of the essential components for the initiation of protein synthesis. Protects formylmethionyl-tRNA from spontaneous hydrolysis and promotes its binding to the 30S ribosomal subunits. Also involved in the hydrolysis of GTP during the formation of the 70S ribosomal complex. This is Translation initiation factor IF-2 from Dichelobacter nodosus (strain VCS1703A).